Reading from the N-terminus, the 535-residue chain is CTP synthase (535 aa).

The segment at 1-267 (MTKYIFVTGG…DSLVCSHLKL (267 aa)) is amidoligase domain. Ser13 serves as a coordination point for CTP. Ser13 lines the UTP pocket. 14–19 (SLGKGI) provides a ligand contact to ATP. Position 54 (Tyr54) interacts with L-glutamine. Asp71 is an ATP binding site. Mg(2+) is bound by residues Asp71 and Glu141. CTP contacts are provided by residues 148–150 (DIE), 188–193 (KTKPTQ), and Lys224. UTP is bound by residues 188–193 (KTKPTQ) and Lys224. One can recognise a Glutamine amidotransferase type-1 domain in the interval 292–534 (TIALVGKYVE…VHASLKTSEK (243 aa)). Residue Gly354 coordinates L-glutamine. The Nucleophile; for glutamine hydrolysis role is filled by Cys381. Residues 382-385 (LGMQ), Glu405, and Arg462 contribute to the L-glutamine site. Catalysis depends on residues His507 and Glu509.

The protein belongs to the CTP synthase family. As to quaternary structure, homotetramer.

The enzyme catalyses UTP + L-glutamine + ATP + H2O = CTP + L-glutamate + ADP + phosphate + 2 H(+). The catalysed reaction is L-glutamine + H2O = L-glutamate + NH4(+). It carries out the reaction UTP + NH4(+) + ATP = CTP + ADP + phosphate + 2 H(+). It participates in pyrimidine metabolism; CTP biosynthesis via de novo pathway; CTP from UDP: step 2/2. Its activity is regulated as follows. Allosterically activated by GTP, when glutamine is the substrate; GTP has no effect on the reaction when ammonia is the substrate. The allosteric effector GTP functions by stabilizing the protein conformation that binds the tetrahedral intermediate(s) formed during glutamine hydrolysis. Inhibited by the product CTP, via allosteric rather than competitive inhibition. Catalyzes the ATP-dependent amination of UTP to CTP with either L-glutamine or ammonia as the source of nitrogen. Regulates intracellular CTP levels through interactions with the four ribonucleotide triphosphates. The chain is CTP synthase from Bacillus licheniformis (strain ATCC 14580 / DSM 13 / JCM 2505 / CCUG 7422 / NBRC 12200 / NCIMB 9375 / NCTC 10341 / NRRL NRS-1264 / Gibson 46).